Reading from the N-terminus, the 183-residue chain is ER membrane protein complex subunit 4 (183 aa).

T2 bears the N-acetylthreonine mark. Residues 2–66 (TAQGGLVANR…VQETDRILVE (65 aa)) are Cytoplasmic-facing. The disordered stretch occupies residues 20–39 (ELSGPGGGSRGRSDRGSGQG). Residue S36 is modified to Phosphoserine. The chain crosses the membrane as a helical span at residues 67 to 87 (KRCWDIALGPLKQIPMNLFIM). Over 88–98 (YMAGNTISIFP) the chain is Lumenal. Residues 99 to 120 (TMMVCMMAWRPIQALMAISATF) form a helical membrane-spanning segment. The Cytoplasmic portion of the chain corresponds to 121–127 (KMLESSS). A helical membrane pass occupies residues 128–148 (QKFLQGLVYLIGNLMGLALAV). Residues 149-183 (YKCQSMGLLPTHASDWLAFIEPPERMEFSGGGLLL) are Lumenal-facing.

The protein belongs to the EMC4 family. In terms of assembly, component of the ER membrane protein complex (EMC). Isoform 1 is expressed in brain and heart. Isoform 2 is expressed in heart.

The protein localises to the endoplasmic reticulum membrane. In terms of biological role, part of the endoplasmic reticulum membrane protein complex (EMC) that enables the energy-independent insertion into endoplasmic reticulum membranes of newly synthesized membrane proteins. Preferentially accommodates proteins with transmembrane domains that are weakly hydrophobic or contain destabilizing features such as charged and aromatic residues. Involved in the cotranslational insertion of multi-pass membrane proteins in which stop-transfer membrane-anchor sequences become ER membrane spanning helices. It is also required for the post-translational insertion of tail-anchored/TA proteins in endoplasmic reticulum membranes. By mediating the proper cotranslational insertion of N-terminal transmembrane domains in an N-exo topology, with translocated N-terminus in the lumen of the ER, controls the topology of multi-pass membrane proteins like the G protein-coupled receptors. By regulating the insertion of various proteins in membranes, it is indirectly involved in many cellular processes. This Homo sapiens (Human) protein is ER membrane protein complex subunit 4 (EMC4).